We begin with the raw amino-acid sequence, 447 residues long: Serine/threonine-protein phosphatase 2A 55 kDa regulatory subunit B gamma isoform (447 aa).

WD repeat units lie at residues 22–61 (TEAD…KNAP), 87–128 (EIEE…KRPE), 171–209 (GHTY…RSFN), 220–260 (DLTE…LCDK), 279–317 (EIIS…RPIE), 334–375 (ESDC…DVTL), and 410–446 (DFTK…NSDM).

It belongs to the phosphatase 2A regulatory subunit B family. In terms of assembly, PP2A consists of a common heterodimeric core enzyme, composed of a 36 kDa catalytic subunit (subunit C) and a 65 kDa constant regulatory subunit (PR65 or subunit A), that associates with a variety of regulatory subunits. Proteins that associate with the core dimer include three families of regulatory subunits B (the R2/B/PR55/B55, R3/B''/PR72/PR130/PR59 and R5/B'/B56 families), the 48 kDa variable regulatory subunit, viral proteins, and cell signaling molecules. Interacts with IER5.

The B regulatory subunit might modulate substrate selectivity and catalytic activity, and might also direct the localization of the catalytic enzyme to a particular subcellular compartment. The chain is Serine/threonine-protein phosphatase 2A 55 kDa regulatory subunit B gamma isoform (Ppp2r2c) from Mus musculus (Mouse).